The chain runs to 257 residues: Transmembrane protein C257L (257 aa).

The next 2 helical transmembrane spans lie at leucine 123–leucine 143 and isoleucine 163–valine 183.

It belongs to the asfivirus C257R family.

It localises to the host membrane. The protein localises to the virion. In African swine fever virus (isolate Pig/Kenya/KEN-50/1950) (ASFV), this protein is Transmembrane protein C257L.